Reading from the N-terminus, the 703-residue chain is Probable ATP-dependent RNA helicase DHX35 (703 aa).

Positions 64–229 (LYLIENYQTV…FNQNETSDPA (166 aa)) constitute a Helicase ATP-binding domain. 77-84 (GETGCGKS) contributes to the ATP binding site. A DEAH box motif is present at residues 176–179 (DEAH). The region spanning 261–438 (TVETVVKIHQ…PVILQLKALG (178 aa)) is the Helicase C-terminal domain.

It belongs to the DEAD box helicase family. DEAH subfamily. Identified in the spliceosome C complex.

The enzyme catalyses ATP + H2O = ADP + phosphate + H(+). Functionally, may be involved in pre-mRNA splicing. This chain is Probable ATP-dependent RNA helicase DHX35 (DHX35), found in Homo sapiens (Human).